Here is a 359-residue protein sequence, read N- to C-terminus: Type-1 angiotensin II receptor (359 aa).

Residues 1-25 (MVPNYSTEETVKRIHVDCPVSGRHS) lie on the Extracellular side of the membrane. Residue N4 is glycosylated (N-linked (GlcNAc...) asparagine). Angiotensin II is bound at residue D17. Intrachain disulfides connect C18–C274 and C101–C180. A helical membrane pass occupies residues 26–55 (YIYIMVPTVYSIIFIIGIFGNSLVVIVIYC). Residues 56–61 (YMKLKT) lie on the Cytoplasmic side of the membrane. A helical membrane pass occupies residues 62-89 (VASIFLLNLALADLCFLITLPLWAAYTA). The Extracellular segment spans residues 90-98 (MEYQWPFGN). The chain crosses the membrane as a helical span at residues 99–125 (CLCKLASAGISFNLYASVFLLTCLSID). The Cytoplasmic portion of the chain corresponds to 126–141 (RYLAIVHPVKSRIRRT). Residues 142–165 (MFVARVTCIVIWLLAGVASLPVII) form a helical membrane-spanning segment. The Extracellular portion of the chain corresponds to 166–190 (HRNIFFAENLNMTVCGFRYDNNNTT). Angiotensin II is bound at residue R167. An N-linked (GlcNAc...) asparagine glycan is attached at N176. F182 and Y184 together coordinate angiotensin II. 2 N-linked (GlcNAc...) asparagine glycosylation sites follow: N187 and N188. The helical transmembrane segment at 191–216 (LRVGLGLSKNLLGFLIPFLIILTSYT) threads the bilayer. K199 lines the angiotensin II pocket. Residues 217–239 (LIWKTLKKAYQIQRNKTRNDDIF) are Cytoplasmic-facing. Residues 240–268 (KMIVAIVFFFFFSWIPHQVFTFLDVLIQL) traverse the membrane as a helical segment. The Extracellular segment spans residues 269-278 (HVITDCKITD). Residues 279-304 (IVDTAMPFTICIAYFNNCLNPFFYVF) form a helical membrane-spanning segment. The Cytoplasmic segment spans residues 305-359 (FGKNFKKYFLQLIKYIPPNVSTHPSLTTKMSSLSYRPPENIRLPTKKTAGSFDTE).

It belongs to the G-protein coupled receptor 1 family. Post-translationally, C-terminal Ser or Thr residues may be phosphorylated. As to expression, adrenal medulla.

The protein localises to the cell membrane. Functionally, receptor for angiotensin II, a vasoconstricting peptide, which acts as a key regulator of blood pressure and sodium retention by the kidney. The activated receptor in turn couples to G-alpha proteins G(q) (GNAQ, GNA11, GNA14 or GNA15) and thus activates phospholipase C and increases the cytosolic Ca(2+) concentrations, which in turn triggers cellular responses such as stimulation of protein kinase C. This is Type-1 angiotensin II receptor (AGTR1) from Meleagris gallopavo (Wild turkey).